We begin with the raw amino-acid sequence, 806 residues long: Polyribonucleotide nucleotidyltransferase (806 aa).

2 residues coordinate Mg(2+): Asp-488 and Asp-494. Positions 555–614 (PQIRTVQIPTDKIRDLIGPGGKTIRGIIEATQVKIDVDDTGRVNIASSDEEGLKKALAMI) constitute a KH domain. Positions 624–691 (GKTYLGKVVR…EGNRIKLSRK (68 aa)) constitute an S1 motif domain. The tract at residues 698–806 (RQKLGLPEPG…QGGGGNRGPQ (109 aa)) is disordered. Residues 704 to 717 (PEPGAEAPAAAEGQ) are compositionally biased toward low complexity. Residues 738 to 757 (GGEDFDDFDEEGGEGEGEDE) are compositionally biased toward acidic residues. The span at 758-774 (NFNREDTPNSAPGERRP) shows a compositional bias: basic and acidic residues. Residues 783-792 (RGRRRRRGRG) show a composition bias toward basic residues. Positions 793–806 (RGPGQGGGGNRGPQ) are enriched in gly residues.

The protein belongs to the polyribonucleotide nucleotidyltransferase family. Mg(2+) is required as a cofactor.

It localises to the cytoplasm. The enzyme catalyses RNA(n+1) + phosphate = RNA(n) + a ribonucleoside 5'-diphosphate. Its function is as follows. Involved in mRNA degradation. Catalyzes the phosphorolysis of single-stranded polyribonucleotides processively in the 3'- to 5'-direction. In Acidobacterium capsulatum (strain ATCC 51196 / DSM 11244 / BCRC 80197 / JCM 7670 / NBRC 15755 / NCIMB 13165 / 161), this protein is Polyribonucleotide nucleotidyltransferase.